The following is a 150-amino-acid chain: Large ribosomal subunit protein bL9 (150 aa).

This sequence belongs to the bacterial ribosomal protein bL9 family.

In terms of biological role, binds to the 23S rRNA. In Ruthia magnifica subsp. Calyptogena magnifica, this protein is Large ribosomal subunit protein bL9.